Here is a 278-residue protein sequence, read N- to C-terminus: HTH-type transcriptional regulator TsaQ1/TsaQ2 (278 aa).

The region spanning 19-80 is the HTH iclR-type domain; the sequence is VHSLAKGLEI…PRSRKLAMGA (62 aa). A DNA-binding region (H-T-H motif) is located at residues 40-59; sequence NQQLVELTGLPKATVSRLTS. Positions 95 to 266 constitute an IclR-ED domain; sequence LQRIARPHME…VQDIQAEMRA (172 aa).

Its function is as follows. Both copies function as additional regulators for the tsa locus, specifically for tsaT. The protein is HTH-type transcriptional regulator TsaQ1/TsaQ2 (tsaQ1) of Comamonas testosteroni (Pseudomonas testosteroni).